A 313-amino-acid polypeptide reads, in one-letter code: tRNA uridine(34) hydroxylase (313 aa).

A Rhodanese domain is found at 127-225; it reads SDPDTILIDT…YLETVPEEES (99 aa). Residue Cys-185 is the Cysteine persulfide intermediate of the active site.

Belongs to the TrhO family.

It carries out the reaction uridine(34) in tRNA + AH2 + O2 = 5-hydroxyuridine(34) in tRNA + A + H2O. Functionally, catalyzes oxygen-dependent 5-hydroxyuridine (ho5U) modification at position 34 in tRNAs. The sequence is that of tRNA uridine(34) hydroxylase from Gluconobacter oxydans (strain 621H) (Gluconobacter suboxydans).